A 192-amino-acid chain; its full sequence is Probable GTP-binding protein EngB (192 aa).

The 171-residue stretch at 22-192 folds into the EngB-type G domain; that stretch reads NLPQIVIVGR…QVLSIFEKYA (171 aa). Residues 30–37, 57–61, 75–78, 142–145, and 173–175 each bind GTP; these read GRSNVGKS, GKTRG, DLPG, TKAD, and FSA. Serine 37 and threonine 59 together coordinate Mg(2+).

The protein belongs to the TRAFAC class TrmE-Era-EngA-EngB-Septin-like GTPase superfamily. EngB GTPase family. Mg(2+) is required as a cofactor.

In terms of biological role, necessary for normal cell division and for the maintenance of normal septation. The protein is Probable GTP-binding protein EngB of Thermoanaerobacter pseudethanolicus (strain ATCC 33223 / 39E) (Clostridium thermohydrosulfuricum).